The chain runs to 142 residues: Large ribosomal subunit protein uL11 (142 aa).

Belongs to the universal ribosomal protein uL11 family. In terms of assembly, part of the ribosomal stalk of the 50S ribosomal subunit. Interacts with L10 and the large rRNA to form the base of the stalk. L10 forms an elongated spine to which L12 dimers bind in a sequential fashion forming a multimeric L10(L12)X complex. One or more lysine residues are methylated.

In terms of biological role, forms part of the ribosomal stalk which helps the ribosome interact with GTP-bound translation factors. The protein is Large ribosomal subunit protein uL11 of Shigella boydii serotype 18 (strain CDC 3083-94 / BS512).